The following is a 500-amino-acid chain: Probable lipoprotein aminopeptidase LpqL (500 aa).

The first 24 residues, 1 to 24 (MVNKSRMMPAVLAVAVVVAFLTTG), serve as a signal peptide directing secretion. Residue Cys25 is the site of N-palmitoyl cysteine attachment. Residue Cys25 is the site of S-diacylglycerol cysteine attachment. The PA domain maps to 140 to 231 (VTGPLVAAPA…VTKSVGFQLR (92 aa)). Residues His271 and Asp283 each coordinate Zn(2+). Glu316 functions as the Proton acceptor in the catalytic mechanism. Glu317, Asp345, and His448 together coordinate Zn(2+).

This sequence belongs to the peptidase M28 family. M28A subfamily. Zn(2+) is required as a cofactor. In terms of processing, modified by Lgt on Cys-25 with an S-linked diacylglycerol with a mixture of C16 and C19 fatty acids (palmitic and tuberculostearic acid), signal peptide is removed by LspA, modified by Lnt with an amide-linked mixture of C16 and C19 fatty acids, expressed in M.bovis.

It localises to the cell membrane. The catalysed reaction is Release of an N-terminal amino acid, Xaa-|-Yaa-, in which Xaa is preferably Leu, but may be other amino acids including Pro although not Arg or Lys, and Yaa may be Pro. Amino acid amides and methyl esters are also readily hydrolyzed, but rates on arylamides are exceedingly low.. An aminopeptidase; acts on free N-terminal amino groups with a very strong preference for Leu in the first position. The chain is Probable lipoprotein aminopeptidase LpqL (lpqL) from Mycobacterium tuberculosis (strain ATCC 25618 / H37Rv).